Consider the following 250-residue polypeptide: Probable transcriptional regulatory protein Paes_0496 (250 aa).

The protein belongs to the TACO1 family.

It is found in the cytoplasm. This chain is Probable transcriptional regulatory protein Paes_0496, found in Prosthecochloris aestuarii (strain DSM 271 / SK 413).